The primary structure comprises 229 residues: Flagellar L-ring protein 1 (229 aa).

An N-terminal signal peptide occupies residues 1–18 (MYLRKISAPLMTMLLLNG). C19 carries the N-palmitoyl cysteine lipid modification. Residue C19 is the site of S-diacylglycerol cysteine attachment.

Belongs to the FlgH family. The basal body constitutes a major portion of the flagellar organelle and consists of four rings (L,P,S, and M) mounted on a central rod.

It is found in the cell outer membrane. Its subcellular location is the bacterial flagellum basal body. Its function is as follows. Assembles around the rod to form the L-ring and probably protects the motor/basal body from shearing forces during rotation. This is Flagellar L-ring protein 1 (flgH1) from Yersinia pseudotuberculosis serotype I (strain IP32953).